The primary structure comprises 387 residues: Alpha-sarcoglycan (387 aa).

The signal sequence occupies residues 1 to 23; that stretch reads MAATLTWILLFVGLLAGLRDTKA. Residues 24–290 are Extracellular-facing; that stretch reads QQTTLYPLVG…ATGRDFLADA (267 aa). Residues asparagine 174 and asparagine 246 are each glycosylated (N-linked (GlcNAc...) asparagine). The chain crosses the membrane as a helical span at residues 291 to 311; that stretch reads LVTLLVPLLVALLLTLLLAYI. The Cytoplasmic segment spans residues 312 to 387; that stretch reads MCCRREGQLK…AQVPLILDQH (76 aa). The residue at position 377 (serine 377) is a Phosphoserine.

It belongs to the sarcoglycan alpha/epsilon family. In terms of assembly, interacts with the syntrophin SNTA1. Cross-link to form 2 major subcomplexes: one consisting of SGCB, SGCD and SGCG and the other consisting of SGCB and SGCD. The association between SGCB and SGCG is particularly strong while SGCA is loosely associated with the other sarcoglycans. As to expression, strongly expressed in skeletal and heart muscle.

Its subcellular location is the cell membrane. It localises to the sarcolemma. The protein localises to the cytoplasm. It is found in the cytoskeleton. In terms of biological role, component of the sarcoglycan complex, a subcomplex of the dystrophin-glycoprotein complex which forms a link between the F-actin cytoskeleton and the extracellular matrix. The polypeptide is Alpha-sarcoglycan (SGCA) (Mesocricetus auratus (Golden hamster)).